The following is an 857-amino-acid chain: Leucine--tRNA ligase (857 aa).

Residues 42–52 (PYPSGTLHMGH) carry the 'HIGH' region motif. A 'KMSKS' region motif is present at residues 616-620 (KMSKS). K619 contributes to the ATP binding site.

This sequence belongs to the class-I aminoacyl-tRNA synthetase family.

It is found in the cytoplasm. The enzyme catalyses tRNA(Leu) + L-leucine + ATP = L-leucyl-tRNA(Leu) + AMP + diphosphate. In Parasynechococcus marenigrum (strain WH8102), this protein is Leucine--tRNA ligase.